The sequence spans 339 residues: Ribosomal RNA small subunit methyltransferase C (339 aa).

It belongs to the methyltransferase superfamily. RsmC family. In terms of assembly, monomer.

The protein resides in the cytoplasm. It carries out the reaction guanosine(1207) in 16S rRNA + S-adenosyl-L-methionine = N(2)-methylguanosine(1207) in 16S rRNA + S-adenosyl-L-homocysteine + H(+). Functionally, specifically methylates the guanine in position 1207 of 16S rRNA in the 30S particle. The polypeptide is Ribosomal RNA small subunit methyltransferase C (Aliivibrio fischeri (strain ATCC 700601 / ES114) (Vibrio fischeri)).